Reading from the N-terminus, the 336-residue chain is Holliday junction branch migration complex subunit RuvB (336 aa).

The large ATPase domain (RuvB-L) stretch occupies residues 1–182 (MKERIVNLET…FGMSFRMQFY (182 aa)). Residues Leu21, Arg22, Gly63, Lys66, Thr67, Ser68, 129-131 (EDF), Arg172, Tyr182, and Arg219 contribute to the ATP site. Residue Thr67 participates in Mg(2+) binding. Positions 183–253 (SPSELSLIIK…ITLHALNELG (71 aa)) are small ATPAse domain (RuvB-S). Positions 256–336 (ELGFDEADLA…IPTLNPQTLF (81 aa)) are head domain (RuvB-H). The DNA site is built by Arg310 and Arg315.

Belongs to the RuvB family. In terms of assembly, homohexamer. Forms an RuvA(8)-RuvB(12)-Holliday junction (HJ) complex. HJ DNA is sandwiched between 2 RuvA tetramers; dsDNA enters through RuvA and exits via RuvB. An RuvB hexamer assembles on each DNA strand where it exits the tetramer. Each RuvB hexamer is contacted by two RuvA subunits (via domain III) on 2 adjacent RuvB subunits; this complex drives branch migration. In the full resolvosome a probable DNA-RuvA(4)-RuvB(12)-RuvC(2) complex forms which resolves the HJ.

The protein localises to the cytoplasm. It carries out the reaction ATP + H2O = ADP + phosphate + H(+). In terms of biological role, the RuvA-RuvB-RuvC complex processes Holliday junction (HJ) DNA during genetic recombination and DNA repair, while the RuvA-RuvB complex plays an important role in the rescue of blocked DNA replication forks via replication fork reversal (RFR). RuvA specifically binds to HJ cruciform DNA, conferring on it an open structure. The RuvB hexamer acts as an ATP-dependent pump, pulling dsDNA into and through the RuvAB complex. RuvB forms 2 homohexamers on either side of HJ DNA bound by 1 or 2 RuvA tetramers; 4 subunits per hexamer contact DNA at a time. Coordinated motions by a converter formed by DNA-disengaged RuvB subunits stimulates ATP hydrolysis and nucleotide exchange. Immobilization of the converter enables RuvB to convert the ATP-contained energy into a lever motion, pulling 2 nucleotides of DNA out of the RuvA tetramer per ATP hydrolyzed, thus driving DNA branch migration. The RuvB motors rotate together with the DNA substrate, which together with the progressing nucleotide cycle form the mechanistic basis for DNA recombination by continuous HJ branch migration. Branch migration allows RuvC to scan DNA until it finds its consensus sequence, where it cleaves and resolves cruciform DNA. This Helicobacter pylori (strain P12) protein is Holliday junction branch migration complex subunit RuvB.